The sequence spans 76 residues: Large ribosomal subunit protein eL20 (76 aa).

This sequence belongs to the eukaryotic ribosomal protein eL20 family. Part of the 50S ribosomal subunit. Binds 23S rRNA.

This Methanococcus vannielii (strain ATCC 35089 / DSM 1224 / JCM 13029 / OCM 148 / SB) protein is Large ribosomal subunit protein eL20.